Consider the following 290-residue polypeptide: Arylamine N-acetyltransferase 1 (290 aa).

Met1 is subject to N-acetylmethionine. Cys68 acts as the Acyl-thioester intermediate in catalysis. Positions 103 and 104 each coordinate CoA. 106-107 (IH) lines the substrate pocket. Active-site residues include His107 and Asp122. CoA contacts are provided by Tyr208 and Ser214.

Belongs to the arylamine N-acetyltransferase family.

The protein localises to the cytoplasm. It catalyses the reaction an arylamine + acetyl-CoA = an N-acetylarylamine + CoA. This Oryctolagus cuniculus (Rabbit) protein is Arylamine N-acetyltransferase 1 (NAT1).